The chain runs to 381 residues: 1-deoxy-D-xylulose 5-phosphate reductoisomerase (381 aa).

Threonine 11, glycine 12, serine 13, isoleucine 14, asparagine 37, and asparagine 121 together coordinate NADPH. A 1-deoxy-D-xylulose 5-phosphate-binding site is contributed by lysine 122. Glutamate 123 provides a ligand contact to NADPH. Aspartate 147 is a binding site for Mn(2+). Residues serine 148, glutamate 149, serine 173, and histidine 196 each contribute to the 1-deoxy-D-xylulose 5-phosphate site. Glutamate 149 contacts Mn(2+). Position 202 (glycine 202) interacts with NADPH. 1-deoxy-D-xylulose 5-phosphate is bound by residues serine 209, asparagine 214, lysine 215, and glutamate 218. Glutamate 218 lines the Mn(2+) pocket.

Belongs to the DXR family. Requires Mg(2+) as cofactor. It depends on Mn(2+) as a cofactor.

It catalyses the reaction 2-C-methyl-D-erythritol 4-phosphate + NADP(+) = 1-deoxy-D-xylulose 5-phosphate + NADPH + H(+). Its pathway is isoprenoid biosynthesis; isopentenyl diphosphate biosynthesis via DXP pathway; isopentenyl diphosphate from 1-deoxy-D-xylulose 5-phosphate: step 1/6. Its function is as follows. Catalyzes the NADPH-dependent rearrangement and reduction of 1-deoxy-D-xylulose-5-phosphate (DXP) to 2-C-methyl-D-erythritol 4-phosphate (MEP). The polypeptide is 1-deoxy-D-xylulose 5-phosphate reductoisomerase (Ruminiclostridium cellulolyticum (strain ATCC 35319 / DSM 5812 / JCM 6584 / H10) (Clostridium cellulolyticum)).